Reading from the N-terminus, the 171-residue chain is Co-chaperone protein HscB (171 aa).

One can recognise a J domain in the interval 2-74 (DYFTLFGLPA…LTRAEYLLSL (73 aa)).

This sequence belongs to the HscB family. As to quaternary structure, interacts with HscA and stimulates its ATPase activity. Interacts with IscU.

Its function is as follows. Co-chaperone involved in the maturation of iron-sulfur cluster-containing proteins. Seems to help targeting proteins to be folded toward HscA. The polypeptide is Co-chaperone protein HscB (Salmonella paratyphi A (strain AKU_12601)).